The primary structure comprises 363 residues: Protein-arginine kinase (363 aa).

Positions 24 to 254 (IVLSSRIRLA…AQLIEQERSA (231 aa)) constitute a Phosphagen kinase C-terminal domain. ATP is bound by residues 27–31 (SSRIR), His-92, Arg-125, 176–180 (RASVM), and 207–212 (RGIYGE). An RDXXRA motif of the pArg binding pocket involved in allosteric regulation motif is present at residues 337 to 342 (RDARRA).

Belongs to the ATP:guanido phosphotransferase family.

It catalyses the reaction L-arginyl-[protein] + ATP = N(omega)-phospho-L-arginyl-[protein] + ADP + H(+). Appears to be allosterically activated by the binding of pArg-containing polypeptides to the pArg-binding pocket localized in the C-terminal domain of McsB. In terms of biological role, catalyzes the specific phosphorylation of arginine residues in a large number of proteins. Is part of the bacterial stress response system. Protein arginine phosphorylation has a physiologically important role and is involved in the regulation of many critical cellular processes, such as protein homeostasis, motility, competence, and stringent and stress responses, by regulating gene expression and protein activity. The sequence is that of Protein-arginine kinase from Bacillus velezensis (strain DSM 23117 / BGSC 10A6 / LMG 26770 / FZB42) (Bacillus amyloliquefaciens subsp. plantarum).